The primary structure comprises 299 residues: Oxygen-dependent coproporphyrinogen-III oxidase (299 aa).

Serine 92 lines the substrate pocket. 2 residues coordinate a divalent metal cation: histidine 96 and histidine 106. Histidine 106 serves as the catalytic Proton donor. 108-110 is a binding site for substrate; sequence NVR. A divalent metal cation contacts are provided by histidine 145 and histidine 175. Positions 240–275 are important for dimerization; sequence YVEFNLVWDRGTLFGLQTGGRTESILMSMPPLVRWE. A substrate-binding site is contributed by 258–260; sequence GGR.

Belongs to the aerobic coproporphyrinogen-III oxidase family. As to quaternary structure, homodimer. It depends on a divalent metal cation as a cofactor.

The protein resides in the cytoplasm. It carries out the reaction coproporphyrinogen III + O2 + 2 H(+) = protoporphyrinogen IX + 2 CO2 + 2 H2O. It participates in porphyrin-containing compound metabolism; protoporphyrin-IX biosynthesis; protoporphyrinogen-IX from coproporphyrinogen-III (O2 route): step 1/1. In terms of biological role, involved in the heme biosynthesis. Catalyzes the aerobic oxidative decarboxylation of propionate groups of rings A and B of coproporphyrinogen-III to yield the vinyl groups in protoporphyrinogen-IX. The polypeptide is Oxygen-dependent coproporphyrinogen-III oxidase (Salmonella paratyphi B (strain ATCC BAA-1250 / SPB7)).